The sequence spans 395 residues: Glutamyl-tRNA reductase (395 aa).

Substrate-binding positions include 45-48, serine 87, 92-94, and glutamine 98; these read TCNR and EDQ. Residue cysteine 46 is the Nucleophile of the active site. 167 to 172 provides a ligand contact to NADP(+); it reads GAGEMG.

The protein belongs to the glutamyl-tRNA reductase family. As to quaternary structure, homodimer.

It catalyses the reaction (S)-4-amino-5-oxopentanoate + tRNA(Glu) + NADP(+) = L-glutamyl-tRNA(Glu) + NADPH + H(+). Its pathway is porphyrin-containing compound metabolism; protoporphyrin-IX biosynthesis; 5-aminolevulinate from L-glutamyl-tRNA(Glu): step 1/2. Catalyzes the NADPH-dependent reduction of glutamyl-tRNA(Glu) to glutamate 1-semialdehyde (GSA). The sequence is that of Glutamyl-tRNA reductase from Methanosphaera stadtmanae (strain ATCC 43021 / DSM 3091 / JCM 11832 / MCB-3).